Reading from the N-terminus, the 364-residue chain is Ferrochelatase (364 aa).

Fe cation contacts are provided by His211 and Glu292.

The protein belongs to the ferrochelatase family.

It is found in the cytoplasm. It carries out the reaction heme b + 2 H(+) = protoporphyrin IX + Fe(2+). It participates in porphyrin-containing compound metabolism; protoheme biosynthesis; protoheme from protoporphyrin-IX: step 1/1. Its function is as follows. Catalyzes the ferrous insertion into protoporphyrin IX. This is Ferrochelatase from Nitrosomonas europaea (strain ATCC 19718 / CIP 103999 / KCTC 2705 / NBRC 14298).